The chain runs to 359 residues: Ornithine cyclodeaminase (359 aa).

L-ornithine is bound by residues R53 and K77. Residues T92, R120, 147-148 (AQ), D169, T209, 232-235 (VGGD), K239, and S300 each bind NAD(+). Residue R120 coordinates L-ornithine. Residue D235 participates in L-ornithine binding. D235 serves as the catalytic Proton donor/acceptor. V301 is an L-ornithine binding site.

Belongs to the ornithine cyclodeaminase/mu-crystallin family. NAD(+) is required as a cofactor.

The enzyme catalyses L-ornithine = L-proline + NH4(+). The protein operates within amino-acid biosynthesis; L-proline biosynthesis; L-proline from L-ornithine: step 1/1. In terms of biological role, catalyzes the conversion of L-ornithine into L-proline with release of ammonia. The polypeptide is Ornithine cyclodeaminase (Brucella melitensis biotype 1 (strain ATCC 23456 / CCUG 17765 / NCTC 10094 / 16M)).